A 213-amino-acid polypeptide reads, in one-letter code: N-(5'-phosphoribosyl)anthranilate isomerase (213 aa).

Belongs to the TrpF family.

It carries out the reaction N-(5-phospho-beta-D-ribosyl)anthranilate = 1-(2-carboxyphenylamino)-1-deoxy-D-ribulose 5-phosphate. It functions in the pathway amino-acid biosynthesis; L-tryptophan biosynthesis; L-tryptophan from chorismate: step 3/5. In Hahella chejuensis (strain KCTC 2396), this protein is N-(5'-phosphoribosyl)anthranilate isomerase.